We begin with the raw amino-acid sequence, 518 residues long: Glutamate--cysteine ligase (518 aa).

This sequence belongs to the glutamate--cysteine ligase type 1 family. Type 1 subfamily.

The enzyme catalyses L-cysteine + L-glutamate + ATP = gamma-L-glutamyl-L-cysteine + ADP + phosphate + H(+). The protein operates within sulfur metabolism; glutathione biosynthesis; glutathione from L-cysteine and L-glutamate: step 1/2. The protein is Glutamate--cysteine ligase of Salmonella gallinarum (strain 287/91 / NCTC 13346).